Consider the following 476-residue polypeptide: Aspartyl/glutamyl-tRNA(Asn/Gln) amidotransferase subunit B (476 aa).

Belongs to the GatB/GatE family. GatB subfamily. Heterotrimer of A, B and C subunits.

It carries out the reaction L-glutamyl-tRNA(Gln) + L-glutamine + ATP + H2O = L-glutaminyl-tRNA(Gln) + L-glutamate + ADP + phosphate + H(+). The enzyme catalyses L-aspartyl-tRNA(Asn) + L-glutamine + ATP + H2O = L-asparaginyl-tRNA(Asn) + L-glutamate + ADP + phosphate + 2 H(+). In terms of biological role, allows the formation of correctly charged Asn-tRNA(Asn) or Gln-tRNA(Gln) through the transamidation of misacylated Asp-tRNA(Asn) or Glu-tRNA(Gln) in organisms which lack either or both of asparaginyl-tRNA or glutaminyl-tRNA synthetases. The reaction takes place in the presence of glutamine and ATP through an activated phospho-Asp-tRNA(Asn) or phospho-Glu-tRNA(Gln). In Clostridium botulinum (strain 657 / Type Ba4), this protein is Aspartyl/glutamyl-tRNA(Asn/Gln) amidotransferase subunit B.